The following is a 320-amino-acid chain: MKKIMITGALGQIGTELVVKCRTLYGNDNVLATDIREPEEGSALKNGPFEILDVTDKARMDELVESFKPDTMMHMAALLSATAEKNPLFAWDLNMGGLMNALEVAREYKLQFFTPSSIGAFGPSTPKVNTPQVTIQRPTSMYGVNKVAGELLCQYYFEKFGVDTRSVRFPGLISHIKEPGGGTTDYAVDIYFKAVREGQYSSFIAKDTFMDMMFMEDAINAIIQLMEADGVKLINRNAYNLSAMSIEPEMVKEAIQEYYPDFKLDYDVDPVRQSIADSWPNSIDVSCARAEWGFDPQYDLSAMTKVMLDAIEGKEKAEVK.

It belongs to the NAD(P)-dependent epimerase/dehydratase family.

This is an uncharacterized protein from Staphylococcus saprophyticus subsp. saprophyticus (strain ATCC 15305 / DSM 20229 / NCIMB 8711 / NCTC 7292 / S-41).